The primary structure comprises 142 residues: Endoribonuclease YbeY (142 aa).

Zn(2+)-binding residues include H107, H111, and D117.

It belongs to the endoribonuclease YbeY family. Requires Zn(2+) as cofactor.

The protein resides in the cytoplasm. Its function is as follows. Single strand-specific metallo-endoribonuclease involved in late-stage 70S ribosome quality control and in maturation of the 3' terminus of the 16S rRNA. The protein is Endoribonuclease YbeY of Parabacteroides distasonis (strain ATCC 8503 / DSM 20701 / CIP 104284 / JCM 5825 / NCTC 11152).